The following is a 466-amino-acid chain: Glutamate--tRNA ligase (466 aa).

The short motif at 11–21 (PSPTGFIHLGN) is the 'HIGH' region element. A 'KMSKS' region motif is present at residues 243–247 (KMSKR). Position 246 (Lys-246) interacts with ATP.

This sequence belongs to the class-I aminoacyl-tRNA synthetase family. Glutamate--tRNA ligase type 1 subfamily. Monomer.

The protein localises to the cytoplasm. It catalyses the reaction tRNA(Glu) + L-glutamate + ATP = L-glutamyl-tRNA(Glu) + AMP + diphosphate. Functionally, catalyzes the attachment of glutamate to tRNA(Glu) in a two-step reaction: glutamate is first activated by ATP to form Glu-AMP and then transferred to the acceptor end of tRNA(Glu). The protein is Glutamate--tRNA ligase of Cupriavidus taiwanensis (strain DSM 17343 / BCRC 17206 / CCUG 44338 / CIP 107171 / LMG 19424 / R1) (Ralstonia taiwanensis (strain LMG 19424)).